Here is a 95-residue protein sequence, read N- to C-terminus: MNLKPLNDRVLVKRLESEEKTAGGLYIPDTAKEKPSRGEVIAVGPGKTADDGKVIAMTVKTGDVVLFNKYAGTEVKLDGVDHLVMREDDILAIIQ.

This sequence belongs to the GroES chaperonin family. Heptamer of 7 subunits arranged in a ring. Interacts with the chaperonin GroEL.

The protein localises to the cytoplasm. Functionally, together with the chaperonin GroEL, plays an essential role in assisting protein folding. The GroEL-GroES system forms a nano-cage that allows encapsulation of the non-native substrate proteins and provides a physical environment optimized to promote and accelerate protein folding. GroES binds to the apical surface of the GroEL ring, thereby capping the opening of the GroEL channel. The polypeptide is Co-chaperonin GroES (Oleidesulfovibrio alaskensis (strain ATCC BAA-1058 / DSM 17464 / G20) (Desulfovibrio alaskensis)).